Consider the following 129-residue polypeptide: NADH-quinone oxidoreductase subunit A (129 aa).

The next 3 helical transmembrane spans lie at 14–34, 67–87, and 95–115; these read LAIH…VAAL, FLIA…FAWA, and WFGL…LVYL.

The protein belongs to the complex I subunit 3 family. As to quaternary structure, NDH-1 is composed of 14 different subunits. Subunits NuoA, H, J, K, L, M, N constitute the membrane sector of the complex.

The protein resides in the cell inner membrane. The catalysed reaction is a quinone + NADH + 5 H(+)(in) = a quinol + NAD(+) + 4 H(+)(out). NDH-1 shuttles electrons from NADH, via FMN and iron-sulfur (Fe-S) centers, to quinones in the respiratory chain. The immediate electron acceptor for the enzyme in this species is believed to be ubiquinone. Couples the redox reaction to proton translocation (for every two electrons transferred, four hydrogen ions are translocated across the cytoplasmic membrane), and thus conserves the redox energy in a proton gradient. The polypeptide is NADH-quinone oxidoreductase subunit A (Rhodopseudomonas palustris (strain HaA2)).